The primary structure comprises 74 residues: Kappa-scoloptoxin(07)-Ssm2d (74 aa).

An N-terminal signal peptide occupies residues 1-19 (MLVFYALLFVTVFSNTVMG). Positions 20 to 41 (ATIDKPIPKPILREAIEEIEVN) are excised as a propeptide.

It belongs to the scoloptoxin-07 family. Contains 3 disulfide bonds. In terms of tissue distribution, expressed by the venom gland.

The protein localises to the secreted. Inhibits voltage-gated potassium channels. The sequence is that of Kappa-scoloptoxin(07)-Ssm2d from Scolopendra mutilans (Chinese red-headed centipede).